Consider the following 590-residue polypeptide: MNKQLKEKLALLPDQPGCYLMKDRQKTVIYVGKAKVLKNRVRSYFTGSHDAKTQRLVSEIEDFEYIVTSSNLEALILEMNLIKKYDPKYNVMLKDDKTYPFIKITHERHPRLIVTRNVKKDKGRYFGPYPNVQAARETKKLLDRLYPLRKCSKLPDRVCLYYHLGQCLAPCVKDISEETNREIVEDITRFLKGGHNEIKKELEAKMAEAAEKLEFERAKEFRDQLAHIESTMEKQKMTMNDLLDRDVFAYAYDKGWMCVQVFFIRQGKLIERDVSMFPMYQEADEEFLTFIGQFYSKNNHFLPKEILVPDSVDRDMITELLETAVHQPKKGPKKELLLLAHKNAKIALREKFSLIERDEERSIGAAERLGEALNIYTPHRIEAFDNSNIQGTNPVSAMIVFIDGKPNKKEYRKYKIKTVTGPDDYGSMREVVRRRYTRVLRENLPLPDLIIIDGGKGQINAARDVLENELGLDVPVAGLAKDDKHRTSNLLIGDPLEPVFLERNSQEFYLLQRIQDEVHRFAISFHRQIRGKSVFQSVLDDIPGIGEKRKKMLLKHFGSVKKMKEASLDDIKKAGVPAAAAQLLFEKLKK.

Residues Asp-14–Val-91 form the GIY-YIG domain. One can recognise a UVR domain in the interval Asn-196–Thr-231.

The protein belongs to the UvrC family. As to quaternary structure, interacts with UvrB in an incision complex.

The protein resides in the cytoplasm. In terms of biological role, the UvrABC repair system catalyzes the recognition and processing of DNA lesions. UvrC both incises the 5' and 3' sides of the lesion. The N-terminal half is responsible for the 3' incision and the C-terminal half is responsible for the 5' incision. The polypeptide is UvrABC system protein C (Bacillus velezensis (strain DSM 23117 / BGSC 10A6 / LMG 26770 / FZB42) (Bacillus amyloliquefaciens subsp. plantarum)).